We begin with the raw amino-acid sequence, 339 residues long: Exopolyphosphatase 1 (339 aa).

Residues Q315 to T339 form a disordered region. Basic and acidic residues predominate over residues R319–T339.

The protein belongs to the GppA/Ppx family. As to quaternary structure, homodimer.

It catalyses the reaction [phosphate](n) + H2O = [phosphate](n-1) + phosphate + H(+). Degradation of inorganic polyphosphates (polyP). Releases orthophosphate processively from the ends of the polyP chain. This is Exopolyphosphatase 1 from Mycobacterium leprae (strain TN).